The following is a 102-amino-acid chain: Acid shock protein (102 aa).

The signal sequence occupies residues 1–21 (MKKVLALVVAAAMGLSSAAFA). Residues 22–41 (AETATTPAPTATTTKAAPAK) show a composition bias toward low complexity. Positions 22–58 (AETATTPAPTATTTKAAPAKTTHHKKQHKAAPAQKAQ) are excised as a propeptide. Residues 22-102 (AETATTPAPT…PAKPAAQPAA (81 aa)) form a disordered region. Positions 80–90 (AAKKHAGKHGH) are enriched in basic residues. The segment covering 91-102 (QQPAKPAAQPAA) has biased composition (low complexity).

It belongs to the Asr family. Proteolytic processing gives rise to the active protein.

It is found in the periplasm. Its function is as follows. Required for growth and/or survival at acidic conditions. This chain is Acid shock protein, found in Shigella flexneri.